The sequence spans 140 residues: MAKKVEKVVKLQIPAGKANPAPPVGPALGQAGVNIMGFCKEFNARTQEQAGLIIPVEISVYEDRSFTFITKTPPAPVLLKKAAGVEKGSGEPNKTKVATVTKDQVREIAQTKMQDLNAADEEAAMRIIEGTARSMGITVQ.

Belongs to the universal ribosomal protein uL11 family. As to quaternary structure, part of the ribosomal stalk of the 50S ribosomal subunit. Interacts with L10 and the large rRNA to form the base of the stalk. L10 forms an elongated spine to which L12 dimers bind in a sequential fashion forming a multimeric L10(L12)X complex. Post-translationally, one or more lysine residues are methylated.

Its function is as follows. Forms part of the ribosomal stalk which helps the ribosome interact with GTP-bound translation factors. The protein is Large ribosomal subunit protein uL11 of Staphylococcus epidermidis (strain ATCC 35984 / DSM 28319 / BCRC 17069 / CCUG 31568 / BM 3577 / RP62A).